A 286-amino-acid polypeptide reads, in one-letter code: 4-diphosphocytidyl-2-C-methyl-D-erythritol kinase (286 aa).

Lysine 13 is an active-site residue. Proline 96–serine 106 serves as a coordination point for ATP. Aspartate 138 is a catalytic residue.

It belongs to the GHMP kinase family. IspE subfamily.

It carries out the reaction 4-CDP-2-C-methyl-D-erythritol + ATP = 4-CDP-2-C-methyl-D-erythritol 2-phosphate + ADP + H(+). Its pathway is isoprenoid biosynthesis; isopentenyl diphosphate biosynthesis via DXP pathway; isopentenyl diphosphate from 1-deoxy-D-xylulose 5-phosphate: step 3/6. Catalyzes the phosphorylation of the position 2 hydroxy group of 4-diphosphocytidyl-2C-methyl-D-erythritol. The chain is 4-diphosphocytidyl-2-C-methyl-D-erythritol kinase from Pseudoalteromonas atlantica (strain T6c / ATCC BAA-1087).